Reading from the N-terminus, the 256-residue chain is Pimeloyl-[acyl-carrier protein] methyl ester esterase (256 aa).

The AB hydrolase-1 domain occupies 15–242 (HLVLLHGWGL…AAHAPFISHP (228 aa)). Substrate is bound by residues Trp22, 82–83 (SL), and 143–147 (FLALQ). Catalysis depends on Ser82, which acts as the Nucleophile. Active-site residues include Asp207 and His235. His235 is a substrate binding site.

It belongs to the AB hydrolase superfamily. Carboxylesterase BioH family. As to quaternary structure, monomer.

The protein resides in the cytoplasm. The enzyme catalyses 6-carboxyhexanoyl-[ACP] methyl ester + H2O = 6-carboxyhexanoyl-[ACP] + methanol + H(+). Its pathway is cofactor biosynthesis; biotin biosynthesis. The physiological role of BioH is to remove the methyl group introduced by BioC when the pimeloyl moiety is complete. It allows to synthesize pimeloyl-ACP via the fatty acid synthetic pathway through the hydrolysis of the ester bonds of pimeloyl-ACP esters. The chain is Pimeloyl-[acyl-carrier protein] methyl ester esterase from Escherichia coli O139:H28 (strain E24377A / ETEC).